The primary structure comprises 390 residues: Phosphoglycerate kinase (390 aa).

Substrate-binding positions include 21 to 23 (DLN), arginine 36, 59 to 62 (HLGR), arginine 114, and arginine 147. ATP-binding positions include lysine 198, glutamate 314, and 340–343 (GGDT).

It belongs to the phosphoglycerate kinase family. In terms of assembly, monomer.

Its subcellular location is the cytoplasm. It catalyses the reaction (2R)-3-phosphoglycerate + ATP = (2R)-3-phospho-glyceroyl phosphate + ADP. Its pathway is carbohydrate degradation; glycolysis; pyruvate from D-glyceraldehyde 3-phosphate: step 2/5. This chain is Phosphoglycerate kinase (pgk), found in Buchnera aphidicola subsp. Acyrthosiphon pisum (strain APS) (Acyrthosiphon pisum symbiotic bacterium).